Reading from the N-terminus, the 217-residue chain is Thymidylate kinase (217 aa).

An ATP-binding site is contributed by 14-21 (GNEGSGKT).

The protein belongs to the thymidylate kinase family.

It catalyses the reaction dTMP + ATP = dTDP + ADP. In terms of biological role, phosphorylation of dTMP to form dTDP in both de novo and salvage pathways of dTTP synthesis. In Orientia tsutsugamushi (strain Ikeda) (Rickettsia tsutsugamushi), this protein is Thymidylate kinase.